The sequence spans 280 residues: Beta-glucosyl-HMC-alpha-glucosyl-transferase (280 aa).

It functions in the pathway genetic information processing; DNA modification. Transfers a gentiobiosyl-group on a hydroxymethylcytosine residue in DNA. Is involved in a DNA modification process to protects the phage genome against its own nucleases and the host restriction endonuclease system. This chain is Beta-glucosyl-HMC-alpha-glucosyl-transferase, found in Enterobacteria phage T2 (Bacteriophage T2).